A 278-amino-acid chain; its full sequence is Elongation factor Ts (278 aa).

Residues 79 to 82 form an involved in Mg(2+) ion dislocation from EF-Tu region; that stretch reads TDFV.

The protein belongs to the EF-Ts family.

It is found in the cytoplasm. Its function is as follows. Associates with the EF-Tu.GDP complex and induces the exchange of GDP to GTP. It remains bound to the aminoacyl-tRNA.EF-Tu.GTP complex up to the GTP hydrolysis stage on the ribosome. The sequence is that of Elongation factor Ts from Borrelia hermsii (strain HS1 / DAH).